The chain runs to 406 residues: MEKHFVGSEIGQLRSVMLHRPNLSLKRLTPSNCQELLFDDVLSVERAGEEHDIFANTLRQQGIEVLLLTDLLTQTLDVADAKAWLLDTQISDYRLGPTFAADIRAWLADMPHRELARHLSGGLTYGEIPASIKNMVVDTHDINDFIMKPLPNHLFTRDTSCWIYNGVSINPMAKPARQRETNNLRAIYRWHPQFAGGDFIKYFGDEDINYDHATLEGGDVLVIGRGAVLIGMSERTTPQGVEFLAQALFKHRQAERVIAVELPKHRSCMHLDTVMTHIDIDTFSVYPEVVRPDVQCWTLTPDGRGGLKRTQESTLVHALETALGIDQVRLITTGGDAFEAEREQWNDANNVLTLRPGVVVGYERNIWTNEKYDKAGITVLPIPGDELGRGRGGARCMSCPLERDGI.

Residue cysteine 396 is the Amidino-cysteine intermediate of the active site.

Belongs to the arginine deiminase family.

The protein localises to the cytoplasm. The catalysed reaction is L-arginine + H2O = L-citrulline + NH4(+). It participates in amino-acid degradation; L-arginine degradation via ADI pathway; carbamoyl phosphate from L-arginine: step 1/2. The sequence is that of Arginine deiminase from Salmonella typhimurium (strain LT2 / SGSC1412 / ATCC 700720).